Reading from the N-terminus, the 397-residue chain is Glia-derived nexin (397 aa).

Positions 1 to 19 (MNWHFPFFILTTVTLYSVH) are cleaved as a signal peptide. N-linked (GlcNAc...) asparagine glycosylation is present at Asn159.

Belongs to the serpin family. As to expression, most abundant in seminal vesicles.

It localises to the secreted. Its subcellular location is the extracellular space. Serine protease inhibitor with activity toward thrombin, trypsin, and urokinase. Promotes neurite extension by inhibiting thrombin. Binds heparin. In Mus musculus (Mouse), this protein is Glia-derived nexin (Serpine2).